Reading from the N-terminus, the 469-residue chain is Glutamate--tRNA ligase (469 aa).

A 'HIGH' region motif is present at residues Pro9–Gly19. Zn(2+) is bound by residues Cys98, Cys100, Cys125, and Asp127. Positions Lys236–Arg240 match the 'KMSKS' region motif. Lys239 is a binding site for ATP.

This sequence belongs to the class-I aminoacyl-tRNA synthetase family. Glutamate--tRNA ligase type 1 subfamily. In terms of assembly, monomer. Zn(2+) serves as cofactor.

The protein resides in the cytoplasm. The enzyme catalyses tRNA(Glu) + L-glutamate + ATP = L-glutamyl-tRNA(Glu) + AMP + diphosphate. Functionally, catalyzes the attachment of glutamate to tRNA(Glu) in a two-step reaction: glutamate is first activated by ATP to form Glu-AMP and then transferred to the acceptor end of tRNA(Glu). This chain is Glutamate--tRNA ligase, found in Shewanella sp. (strain ANA-3).